The sequence spans 461 residues: CBL-interacting protein kinase 1 (461 aa).

The Protein kinase domain occupies 19–274 (YEIGRTLGEG…IAGIKEHEWF (256 aa)). ATP is bound by residues 25–33 (LGEGNFGKV) and Lys48. The active-site Proton acceptor is Asp142. Positions 160–189 (DFGLSALPQHLGNDGLLHTTCGSPNYIAPE) are activation loop. The region spanning 308 to 332 (EKPTHINAFQLIGMASALDLSGFFE) is the NAF domain. The tract at residues 338-367 (QRKIRFTSTHSPKDLFDKIENVVTEMGFQV) is PPI.

Belongs to the protein kinase superfamily. CAMK Ser/Thr protein kinase family. SNF1 subfamily. Mn(2+) serves as cofactor.

The catalysed reaction is L-seryl-[protein] + ATP = O-phospho-L-seryl-[protein] + ADP + H(+). The enzyme catalyses L-threonyl-[protein] + ATP = O-phospho-L-threonyl-[protein] + ADP + H(+). In terms of biological role, CIPK serine-threonine protein kinases interact with CBL proteins. Binding of a CBL protein to the regulatory NAF domain of CIPK protein lead to the activation of the kinase in a calcium-dependent manner. This is CBL-interacting protein kinase 1 (CIPK1) from Oryza sativa subsp. japonica (Rice).